The following is a 205-amino-acid chain: MRFVLPKGRLLRGSLEILRRAGYEIDEPGERRLIQRFNGNEVLLARAFDVPVYVEHGVDVGITGSDVVEERGSDVFVPLDLPFGKCRLSLAMPRESVTPPEDMDGYRIATKYERITRNYFSSLGVEVEVIKLSGSVELAPKVGIADAIVDIVETGTTLRANGLVEVDKVMDVSAQLLVNRISQKTKFDEINSLVLAIKEVVKDGA.

The protein belongs to the ATP phosphoribosyltransferase family. Short subfamily.

Its subcellular location is the cytoplasm. The catalysed reaction is 1-(5-phospho-beta-D-ribosyl)-ATP + diphosphate = 5-phospho-alpha-D-ribose 1-diphosphate + ATP. The protein operates within amino-acid biosynthesis; L-histidine biosynthesis; L-histidine from 5-phospho-alpha-D-ribose 1-diphosphate: step 1/9. Functionally, catalyzes the condensation of ATP and 5-phosphoribose 1-diphosphate to form N'-(5'-phosphoribosyl)-ATP (PR-ATP). Has a crucial role in the pathway because the rate of histidine biosynthesis seems to be controlled primarily by regulation of HisG enzymatic activity. The sequence is that of ATP phosphoribosyltransferase from Thermococcus gammatolerans (strain DSM 15229 / JCM 11827 / EJ3).